A 1478-amino-acid polypeptide reads, in one-letter code: Phospholipase B1, membrane-associated (1478 aa).

The signal sequence occupies residues 1-27 (MELYPGVSPVGLLLLLLLGQGPSQIHG). Residues 28 to 1422 (SSGENTLAWQ…KAEEPSNALY (1395 aa)) lie on the Extracellular side of the membrane. A run of 4 repeats spans residues 43 to 351 (WTLK…YKNS), 366 to 711 (MKEG…TKNS), 712 to 1058 (NLGN…FRNS), and 1068 to 1407 (IENW…LRNS). Positions 43–1407 (WTLKNFPFPC…RPFLYTLRNS (1365 aa)) are 4 X 308-326 AA approximate repeats. N-linked (GlcNAc...) asparagine glycosylation occurs at Asn180. Active-site residues include Ser404 and Asp518. Residues Asn525, Asn626, and Asn637 are each glycosylated (N-linked (GlcNAc...) asparagine). The active site involves His659. 10 N-linked (GlcNAc...) asparagine glycosylation sites follow: Asn715, Asn764, Asn787, Asn801, Asn830, Asn926, Asn1227, Asn1280, Asn1289, and Asn1387. The interval 1408–1450 (QLLPDKAEEPSNALYWAVPVAAIGGLAVGILGVMLWRTVKPVQ) is necessary for membrane localization. Residues 1423-1443 (WAVPVAAIGGLAVGILGVMLW) traverse the membrane as a helical segment. Topologically, residues 1444–1478 (RTVKPVQQEEEEEDTLPNTSVTQDAVSEKRLKAGN) are cytoplasmic. Residues 1451–1478 (QEEEEEDTLPNTSVTQDAVSEKRLKAGN) form a disordered region. A compositionally biased stretch (polar residues) spans 1459–1468 (LPNTSVTQDA). Positions 1469 to 1478 (VSEKRLKAGN) are enriched in basic and acidic residues.

It belongs to the 'GDSL' lipolytic enzyme family. Phospholipase B1 subfamily. Post-translationally, undergoes proteolytic cleavage in the ileum.

It is found in the apical cell membrane. The catalysed reaction is a 1,2-diacyl-sn-glycero-3-phosphocholine + H2O = a 1-acyl-sn-glycero-3-phosphocholine + a fatty acid + H(+). The enzyme catalyses a 1-O-alkyl-2-acyl-sn-glycero-3-phosphocholine + H2O = a 1-O-alkyl-sn-glycero-3-phosphocholine + a fatty acid + H(+). It carries out the reaction a 1-acyl-sn-glycero-3-phosphocholine + H2O = sn-glycerol 3-phosphocholine + a fatty acid + H(+). It catalyses the reaction a triacylglycerol + H2O = a diacylglycerol + a fatty acid + H(+). The catalysed reaction is 1,2-dihexadecanoyl-sn-glycero-3-phosphocholine + H2O = 1-hexadecanoyl-sn-glycero-3-phosphocholine + hexadecanoate + H(+). The enzyme catalyses 1-hexadecanoyl-2-(9Z-octadecenoyl)-sn-glycero-3-phosphocholine + H2O = 1-hexadecanoyl-sn-glycero-3-phosphocholine + (9Z)-octadecenoate + H(+). It carries out the reaction 1,2-di-(9Z-octadecenoyl)-sn-glycero-3-phosphocholine + H2O = 1-(9Z-octadecenoyl)-sn-glycero-3-phosphocholine + (9Z)-octadecenoate + H(+). It catalyses the reaction 1-hexadecanoyl-2-(9Z,12Z-octadecadienoyl)-sn-glycero-3-phosphocholine + H2O = (9Z,12Z)-octadecadienoate + 1-hexadecanoyl-sn-glycero-3-phosphocholine + H(+). The catalysed reaction is 1-hexadecanoyl-2-(9Z,12Z-octadecadienoyl)-sn-glycero-3-phosphocholine + H2O = 2-(9Z,12Z-octadecadienoyl)-sn-glycero-3-phosphocholine + hexadecanoate + H(+). The enzyme catalyses 1-hexadecanoyl-2-(9Z-octadecenoyl)-sn-glycero-3-phosphoethanolamine + H2O = 1-hexadecanoyl-sn-glycero-3-phosphoethanolamine + (9Z)-octadecenoate + H(+). It carries out the reaction 1-hexadecanoyl-2-(9Z-octadecenoyl)-sn-glycero-3-phospho-(1'-sn-glycerol) + H2O = 1-hexadecanoyl-sn-glycero-3-phospho-(1'-sn-glycerol) + (9Z)-octadecenoate + H(+). It catalyses the reaction 1,2-dihexadecanoyl-sn-glycero-3-phosphocholine + 2 H2O = sn-glycerol 3-phosphocholine + 2 hexadecanoate + 2 H(+). The catalysed reaction is 1-O-hexadecyl-2-(9Z)-octadecenoyl-sn-glycero-3-phosphocholine + H2O = 1-O-hexadecyl-sn-glycero-3-phosphocholine + (9Z)-octadecenoate + H(+). The enzyme catalyses 1-hexadecanoyl-sn-glycero-3-phosphocholine + H2O = sn-glycerol 3-phosphocholine + hexadecanoate + H(+). It carries out the reaction 1,2,3-tri-(9Z-octadecenoyl)-glycerol + H2O = di-(9Z)-octadecenoylglycerol + (9Z)-octadecenoate + H(+). It catalyses the reaction 1-hexadecanoyl-2-(9Z)-octadecenoyl-3-octadecanoyl-sn-glycerol + H2O = 1-hexadecanoyl-2-(9Z-octadecenoyl)-sn-glycerol + octadecanoate + H(+). The catalysed reaction is 1,3-dihexadecanoyl-2-(9Z-octadecenoyl)glycerol + H2O = 1,3-dihexadecanoylglycerol + (9Z)-octadecenoate + H(+). The enzyme catalyses 1,3-dihexadecanoyl-2-(9Z-octadecenoyl)glycerol + H2O = 1-hexadecanoyl-2-(9Z-octadecenoyl)-glycerol + hexadecanoate + H(+). It carries out the reaction 1-hexadecanoyl-2-(9Z)-octadecenoyl-3-octadecanoyl-sn-glycerol + H2O = 1-hexadecanoyl-3-octadecanoyl-sn-glycerol + (9Z)-octadecenoate + H(+). It catalyses the reaction 1-hexadecanoyl-2-(9Z)-octadecenoyl-3-octadecanoyl-sn-glycerol + H2O = 2-(9Z-octadecenoyl)-3-octadecanoyl-sn-glycerol + hexadecanoate + H(+). The catalysed reaction is 1-octadecanoyl-2-(9Z,12Z)-octadecadienoyl-sn-glycerol + H2O = 1-octadecanoyl-sn-glycerol + (9Z,12Z)-octadecadienoate + H(+). The enzyme catalyses 1,2-di-(9Z-octadecenoyl)-sn-glycerol + H2O = 1-(9Z-octadecenoyl)-sn-glycerol + (9Z)-octadecenoate + H(+). It carries out the reaction 2,3-di-(9Z)-octadecenoyl-sn-glycerol + H2O = 3-(9Z-octadecenoyl)-sn-glycerol + (9Z)-octadecenoate + H(+). It catalyses the reaction 1,3-di-(9Z-octadecenoyl)-glycerol + H2O = 1-(9Z-octadecenoyl)-glycerol + (9Z)-octadecenoate + H(+). The catalysed reaction is 1-(9Z-octadecenoyl)-glycerol + H2O = glycerol + (9Z)-octadecenoate + H(+). The enzyme catalyses 2-(9Z-octadecenoyl)-glycerol + H2O = glycerol + (9Z)-octadecenoate + H(+). Its function is as follows. Calcium-independent membrane-associated phospholipase that catalyzes complete diacylation of phospholipids by hydrolyzing both sn-1 and sn-2 fatty acyl chains attached to the glycerol backbone (phospholipase B activity). Has dual phospholipase and lysophospholipase activities toward diacylphospholipids. Preferentially cleaves sn-2 ester bonds over sn-1 bonds. Acts as a lipase toward glycerolipid substrates. Hydrolyzes fatty acyl chains of diacylglycerols with preference for the sn-2 position and of triacylglycerols with not positional selectivity. May also hydrolyze long chain retinyl esters such as retinyl palmitate. May contribute to digestion of dietary phospholipids, glycerolipids and retinoids, facilitating lipid absorption at the brush border. The sequence is that of Phospholipase B1, membrane-associated (Plb1) from Mus musculus (Mouse).